The primary structure comprises 352 residues: N-acetyl-gamma-glutamyl-phosphate reductase (352 aa).

Cys158 is a catalytic residue.

Belongs to the NAGSA dehydrogenase family. Type 1 subfamily.

The protein localises to the cytoplasm. The enzyme catalyses N-acetyl-L-glutamate 5-semialdehyde + phosphate + NADP(+) = N-acetyl-L-glutamyl 5-phosphate + NADPH + H(+). It functions in the pathway amino-acid biosynthesis; L-arginine biosynthesis; N(2)-acetyl-L-ornithine from L-glutamate: step 3/4. In terms of biological role, catalyzes the NADPH-dependent reduction of N-acetyl-5-glutamyl phosphate to yield N-acetyl-L-glutamate 5-semialdehyde. This Mycobacterium bovis (strain BCG / Tokyo 172 / ATCC 35737 / TMC 1019) protein is N-acetyl-gamma-glutamyl-phosphate reductase.